A 1222-amino-acid polypeptide reads, in one-letter code: Deubiquitinating protein VCPIP1 (1222 aa).

Residues 1–21 are compositionally biased toward pro residues; it reads MSQPPPPPPPLPPPPPPPEAP. Residues 1–36 are disordered; it reads MSQPPPPPPPLPPPPPPPEAPQTPSSLASAAASGGL. Over residues 25–36 the composition is skewed to low complexity; it reads SSLASAAASGGL. An OTU domain is found at 208–361; that stretch reads LIPVHVDGDG…RNHYIPLVGI (154 aa). Residue Asp-216 is part of the active site. Cys-219 (nucleophile) is an active-site residue. The active site involves His-354. Residue Lys-408 is modified to N6-acetyllysine. Disordered regions lie at residues 725-776, 989-1009, and 1024-1074; these read SVMQ…KEKK, EATT…LGSG, and AFQG…VFTA. 2 positions are modified to phosphoserine: Ser-747 and Ser-757. Low complexity predominate over residues 755–771; the sequence is PSSAPATPTKAPYSPTT. A Phosphothreonine modification is found at Thr-763. Phosphoserine is present on residues Ser-768, Ser-994, and Ser-998. A compositionally biased stretch (basic and acidic residues) spans 1041-1050; that stretch reads LDPRARETSV. A compositionally biased stretch (polar residues) spans 1057–1074; that stretch reads GTDFSNSSTKTEPSVFTA. At Ser-1077 the chain carries Phosphoserine. 2 disordered regions span residues 1113–1175 and 1188–1222; these read VSSI…TETT and ATRS…MDHS. Residues 1143–1157 show a composition bias toward polar residues; sequence VVSSSAKSGSLQTGL. Residues 1163–1175 are compositionally biased toward low complexity; it reads LTGGTENLNTETT. At Ser-1198 the chain carries Phosphoserine. Acidic residues predominate over residues 1200-1209; sequence EELEEMDSQD. A Phosphoserine; by ATM modification is found at Ser-1207. A compositionally biased stretch (polar residues) spans 1210–1222; it reads AEMTNTTEPMDHS.

In terms of assembly, binds VCP and the ternary complex containing STX5A, NSFL1C and VCP. In terms of processing, phosphorylated at Ser-1207 by ATM or ATR following induction of covalent DNA-protein cross-links (DPCs).

The protein resides in the nucleus. The protein localises to the cytoplasm. It is found in the endoplasmic reticulum. It localises to the golgi apparatus. Its subcellular location is the golgi stack. The enzyme catalyses Thiol-dependent hydrolysis of ester, thioester, amide, peptide and isopeptide bonds formed by the C-terminal Gly of ubiquitin (a 76-residue protein attached to proteins as an intracellular targeting signal).. Functionally, deubiquitinating enzyme involved in DNA repair and reassembly of the Golgi apparatus and the endoplasmic reticulum following mitosis. Necessary for VCP-mediated reassembly of Golgi stacks after mitosis. Plays a role in VCP-mediated formation of transitional endoplasmic reticulum (tER). Mediates dissociation of the ternary complex containing STX5A, NSFL1C and VCP. Also involved in DNA repair following phosphorylation by ATM or ATR: acts by catalyzing deubiquitination of SPRTN, thereby promoting SPRTN recruitment to chromatin and subsequent proteolytic cleavage of covalent DNA-protein cross-links (DPCs). Hydrolyzes 'Lys-11'- and 'Lys-48'-linked polyubiquitin chains. Its function is as follows. (Microbial infection) Regulates the duration of C.botulinum neurotoxin type A (BoNT/A) intoxication by catalyzing deubiquitination of Botulinum neurotoxin A light chain (LC), thereby preventing LC degradation by the proteasome, and accelerating botulinum neurotoxin intoxication in patients. The chain is Deubiquitinating protein VCPIP1 from Homo sapiens (Human).